The chain runs to 115 residues: Protamine-2 (115 aa).

A disordered region spans residues 1–115; that stretch reads MVRCHVKSPT…RRRRRCGRQL (115 aa). Ser8 bears the Phosphoserine mark. Residues 24-38 are compositionally biased toward basic and acidic residues; the sequence is ETEHPDQARELRPED. Basic residues-rich tracts occupy residues 44 to 79 and 102 to 115; these read RTHR…RRRG and RRMR…GRQL.

Belongs to the protamine P2 family. Interacts with TDRP. Post-translationally, proteolytic processing into mature chains is required for histone eviction during spermatogenesis. Transition proteins (TNP1 and TNP2) are required for processing. As to expression, testis.

The protein localises to the nucleus. It localises to the chromosome. Its function is as follows. Protamines substitute for histones in the chromatin of sperm during the haploid phase of spermatogenesis. They compact sperm DNA into a highly condensed, stable and inactive complex. This is Protamine-2 (PRM2) from Bos taurus (Bovine).